Consider the following 358-residue polypeptide: Histidinol-phosphate aminotransferase (358 aa).

Position 210 is an N6-(pyridoxal phosphate)lysine (Lys210).

The protein belongs to the class-II pyridoxal-phosphate-dependent aminotransferase family. Histidinol-phosphate aminotransferase subfamily. Homodimer. Requires pyridoxal 5'-phosphate as cofactor.

It catalyses the reaction L-histidinol phosphate + 2-oxoglutarate = 3-(imidazol-4-yl)-2-oxopropyl phosphate + L-glutamate. It participates in amino-acid biosynthesis; L-histidine biosynthesis; L-histidine from 5-phospho-alpha-D-ribose 1-diphosphate: step 7/9. The protein is Histidinol-phosphate aminotransferase of Clostridium beijerinckii (strain ATCC 51743 / NCIMB 8052) (Clostridium acetobutylicum).